Here is a 164-residue protein sequence, read N- to C-terminus: UPF0225 protein Shewmr7_1921 (164 aa).

It belongs to the UPF0225 family.

This chain is UPF0225 protein Shewmr7_1921, found in Shewanella sp. (strain MR-7).